We begin with the raw amino-acid sequence, 3748 residues long: MVLESVVADLLNRFLGDYVENLNKSQLKLGIWGGNVALDNLQIKENALSELDVPFKVKAGQIDKLTLKIPWKNLYGEAVVATLEGLYLLVVPGASIKYDAEKEEKSLQDIKQKELCRIEEALQKAAEKGAHSGEFMYGLENLLYKDVKPGRKRKKHKKHFKKRFKGLDRSKDKPKEAKKDTFLEKLATQVIKNVQVKITDIHIKYEDDITDPERPLSFGVTLREFSLLTTNEHWTPCILNEAEKIIYKLVKLDSLSAYWNVGCCMSYRGSREHILEQLKREILTSTNIPPDHQYIFQPISASAKLYMNPGAESELKTPKLDGNVEVQNIAIELTKPQYLSMIDFLESLDYMVRNAPYRKYKPCLPLHTNCRQWWKYAIDSVLEVHIRRYTQPWSWSNIKNHRQLLKSYKMAYKTKLTQAKVSEEIQKQIQDLEKSLDVFNIILVRQQAQVEVIHSGQKLRKKSAEAGEKRGWFSGFWGKKESKKRDEESSVPETIDDLMTPEEKDKLFTAIGYSENAYNLALPKQYVAHILTLKLVSTSIIIRENRNVPEILRVQIIGLGTQVSQRPGAQALKIEAKLEHWYVTGLRQQDIVPSLVASIGDTTSSLLKIEFETNPENSPADQTLIVQSQPVEVIYDAKTINAVVEFFQSNKGLDLEQITSATLMKLEEIKERTATGLTHIIETRKVLDLRINLKPSYLIIPQTGFHHEKSNLLILDFGTFQLNSKDQGAQKTANASLEEIIDKAYDKFDVEIRSVQLLFAKAEENWKKCRFQHPSTMHILQPMDIHVELAKAMVEKDVRMAKFKVSGGLPLMHVRISDQKIKDALCLINSIPLPQKSSTPSPERQVASIPVLSGGTKALLGTSLLLDGVESESDEEFFDAEDGDSQAARTVKASELKKAAEVPNEELVSLLLKFEIKEVVLELTKQQKEEETILVFNVTQLGTEATMRTFDLTAVSYLRKISLDYHDIKGSRKKPIHLISSSDRPGLDLLKVEYIKVDRNGPSFQTTFEKTEQTVKVAFSSLNLLLQTQALLSSLNYLTTVIPSDSQNTGVAKEVQAMPEKQKNSPLQKVMVPSRDSDVIGFRLFAKLNAFCVTVCDEKSNIAEIKIQGLDSSLSLQSKKQSLFARLENIIVTDVDPKTIHKKAVSIVGNEVFRFNLDLYPDATEGDSYTDMSTVDGVVALHVGCIQIVYLHKFLMSLLSFLNNFQVAKEALSAATAQAAEKAATSVKDLAQRSFRVSVDIDLKAPVIVIPQSSLSTNAVVVDLGLIRVHNRFSLVSGEDTANPPVIDKMEVQLTKLKLSRTAIQPGTSHPDIQLLHPINLEFFVSRNLAANWYHKVPVVEIKGRLDSMNVSLNQEDLNLLFRILAENLGEATEDLDKGKPRIQERGETKACREVSTPQDVHTTQGVPAARVEETRPVDIINVLLNFEIKEVVVTLMKKAERKGSPFHELKILHLGMEAKVKAHDMTAAAYLRNISMRCFHFPDSKGEPLRIVNTSDVSDGILLKLLFIKADSDGPDFKTIHDNTKQKLKVSFSSLDLVLHLEALLSLMDFLSSAIPSSDSSSSEKEPELKPLVGESRSLAIRAVPSSYEGDAFDLKITAELNAFNIFICDQKSNIAEIKIHGMDASISVKPKQTDVFARLKNIIVMNVDSLSIHKKAVSILGDEVFRFQMSLYPDATEGENYGDMSKVDGRLSLKVGCIQIVYVHKFFMSLLSFLNNFQAAKEALSTATVQAAERAASSVKDLAQKSFRLLMDIDLKAPVITIPQSSVSPNVVIADLGLIRVENKFSLVSVEQLALPPVADEMSIQLTQLKLARTVLQADSPQHDVEILKPVNMLLCIQRNLSAAWYTQIPGMEIKGELKPMQVALSQDDLTVLMKILLENLGEASSQPSPTQYAQEAARVKRDTRSGPDYLKEQELADPKPPGDQTVTLQFDFHFDSLSIILYNSDSSQEPRLSFHNDSFRLGELTLHLMASAGKMFKDGSMNVSLKLKTCTLDDLREGIERATSRMIDKKNDQDNNSSMIDISYSQDKNGSQVDAVLDKLYVCASVEFLMTVADFFIKAMPQSPENIAKEIQIPSRQTAAGRVKMEKDDSVRPNMTLKAMITDPEVVFVASLTKADAPALTASFQCNLSLSTSKLEQMMEASVRDLKVLACPFLRERRGKSITTVLQPCSLFMEKCTWASGKQNINIVVKEFVIKISPIILNTVMTIMAAMSPKTKEDEWKDTPKETDNLWAVKSITDYNSWFLGVDMATEVTENFRDSEHPSIEENCVVAVESVQVTLECGLGHRTVPLLLAESKFSGNIKNWTSLMAAAADMTLEVHYYNETHAVWEPLIERVEGNKPWSLKLNVKKNPIQDKSLMPGDDFIPEPQTAVHISSGATMNITISKSCLNVFSNLAKGFSEGAASTFDYSLKDRAPFTVKNALGVPMKVQPNRNLKVMGSPEKSDIYDVGAGQHLELDYASLEPSRQGKLSILSRQESSLFTLTFVPYGYTEVASVPVARPGRRLYNVRNPSASHSDSVLVQIDATEGNKVVTLRSPLQIKNHFSIAFIIYKFVKNVKLLERIGIARPEEEFHVPLDSYRCQLYVQPAGGLEQQYTHSSTYISWKEELHRSREVRCMLQCPAVEVSFLPLIVNTVALPDELSYIGAHGEDWDPAYVIHLYPPLTLRNLLPYSLRYLLEGTAETHELAEGSSADVLHSRISGEIIELVLVKYLGKNWNGHFRICDTLPEFFLVCFSSDTAEVMTVDLSVHVRRIGCRMELSVFSPYWLINKTSRVLQYRSEEIHVKHPADFRDIILFSFKKKNIFSKNKVQLKISTSAWSNGFSLDTVGSYGCVKCPATNMEYLVGVSIKMSSFNLSRVVTLTPFCTVANKSSLDLEVGEIASDGSIPTNKWHYVASSECIPFWPENLSGKLCVRVVGYEGSSKPFFYNRQDNGTLLSLEDLNGGILVDINTAEHSTVITFSDYHEGSAPALIMNHTQWDVLTYKQSGSQEELVLLPGETRLFAWADPTGIRKLTWNYAANFGEHDLLKDECGQFPYDANIQIHWVSFLDGRQRVLLFTDDVALVSKALQAEEMEQADHEVALSLHSLGLSLVNNENKQEVSYVGITSSGVVWEMKPKQKWKPFSQKQIMSLEQAYSKRLASQDRGWVKLDSNFEVNFDKVPMEMRLPIRCPIKRDFLSGIQVEFKQSPHQRSLRARLYWLQVDNQLPGTMFPVVFHPVAPPKSIALDSEPKPFIDVSVITRFNEYSKVLQFKYFMVLIQEMALKVDQGFLGAVISLFTPTTDPEAERKRTKLIQQDIDALNTELMESSMTDMSILSFFEHFHISPVKLHLSLSLGSGGEESDKEKQEMIAIHSVNLLLKSIGATLTDVDDLIFKLAYYEIRYQFYKRDQLMWSVVRHYSEQFLKQMYVLVLGLDVLGNPFGLIRGLSEGVEALFYEPFQGAVQGPEEFAEGLVIGVRSLVGHTVGGAAGVVSRITGSVGKGLAAITMDKEYQQKRREEMGRQPKDFGDSLARGGKGFLRGVVGGVTGIITKPVEGAKKEGAAGFFKGIGKGLVGAVARPTGGIIDMASSTFQGIQRVAESTEEVSSLRPPRLIHEDGIIRPYDRQESEGSDLLENHIKKLEGEAYQFHCAVPGNKRAVLMITNRRALFIKEVEILGHMSVDWQCLFEDFVCPPEVSENLLKISVKEQGLFHKKDSANIGHLRKIYLKDPITAKRAFDAIESAQSARQQQKLMRQSSVKLLRPQGPS.

The 113-residue stretch at 3-115 (LESVVADLLN…SLQDIKQKEL (113 aa)) folds into the Chorein N-terminal domain. At Ser-132 the chain carries Phosphoserine. Thr-613 is subject to Phosphothreonine. Residue Ser-618 is modified to Phosphoserine. Phosphothreonine is present on Thr-623. 4 positions are modified to phosphoserine: Ser-736, Ser-841, Ser-871, and Ser-873. The FFAT motif lies at 876–882 (EFFDAED). Thr-1968 carries the phosphothreonine modification. 2 positions are modified to phosphoserine: Ser-1974 and Ser-2442. The tract at residues 2410 to 3304 (DYSLKDRAPF…IQQDIDALNT (895 aa)) is required for late endosome/lysosome localization. The SHR-BD domain maps to 2760-3012 (ELSVFSPYWL…LFAWADPTGI (253 aa)). The tract at residues 3305-3748 (ELMESSMTDM…VKLLRPQGPS (444 aa)) is required for lipid droplet localization. 2 positions are modified to omega-N-methylarginine: Arg-3514 and Arg-3521. Lys-3533 is modified (N6-acetyllysine).

It belongs to the VPS13 family.

The protein localises to the mitochondrion outer membrane. Its subcellular location is the lipid droplet. The protein resides in the endoplasmic reticulum membrane. It localises to the lysosome membrane. It is found in the late endosome membrane. Its function is as follows. Mediates the transfer of lipids between membranes at organelle contact sites. Necessary for proper mitochondrial function and maintenance of mitochondrial transmembrane potential. Involved in the regulation of PINK1/PRKN-mediated mitophagy in response to mitochondrial depolarization. This is Intermembrane lipid transfer protein VPS13C from Mus musculus (Mouse).